Consider the following 162-residue polypeptide: Caveolin-2 (162 aa).

The Cytoplasmic segment spans residues 1 to 86; that stretch reads MGLETEKADV…FEISKYVIYK (86 aa). Tyrosine 19 carries the phosphotyrosine; by SRC modification. Serine 20 and serine 23 each carry phosphoserine. Tyrosine 27 is modified (phosphotyrosine; by SRC). Position 36 is a phosphoserine (serine 36). Residues 87–107 constitute an intramembrane region (helical); it reads FLTVFLAIPLAFAAGIIFATL. The Cytoplasmic portion of the chain corresponds to 108 to 162; the sequence is SCLHIWIIMPFVKTCLMVLPSVQTIWRSVTDAVIAPLCTSVGRVFSSVSLQLSRD.

It belongs to the caveolin family. As to quaternary structure, monomer or homodimer. Interacts with CAV1; the interaction forms a stable heterooligomeric complex that is required for targeting to lipid rafts and for caveolae formation. Tyrosine phosphorylated forms do not form heterooligomers with the Tyr-19-phosphorylated form existing as a monomer or dimer, and the Tyr-27-form as a monomer only. Interacts (tyrosine phosphorylated form) with the SH2 domain-containing proteins, RASA1, NCK1 and SRC. Interacts (tyrosine phosphorylated form) with INSR, the interaction (Tyr-27-phosphorylated form) is increased on insulin stimulation. Interacts (Tyr-19 phosphorylated form) with MAPK1 (phosphorylated form); the interaction, promoted by insulin, leads to nuclear location and MAPK1 activation. Interacts with STAT3; the interaction is increased on insulin-induced tyrosine phosphorylation leading to STAT activation. In terms of processing, phosphorylated on serine and tyrosine residues. CAV1 promotes phosphorylation on Ser-23 which then targets the complex to the plasma membrane, lipid rafts and caveolae. Phosphorylation on Ser-36 appears to modulate mitosis in endothelial cells. Phosphorylation on both Tyr-19 and Tyr-27 is required for insulin-induced 'Ser-727' phosphorylation of STAT3 and its activation. Phosphorylation on Tyr-19 is required for insulin-induced phosphorylation of MAPK1 and DNA binding of STAT3. Tyrosine phosphorylation is induced by both EGF and insulin (By. similarity).

It is found in the nucleus. It localises to the cytoplasm. The protein resides in the golgi apparatus membrane. Its subcellular location is the cell membrane. The protein localises to the membrane. It is found in the caveola. May act as a scaffolding protein within caveolar membranes. Interacts directly with G-protein alpha subunits and can functionally regulate their activity. Acts as an accessory protein in conjunction with CAV1 in targeting to lipid rafts and driving caveolae formation. The Ser-36 phosphorylated form has a role in modulating mitosis in endothelial cells. Positive regulator of cellular mitogenesis of the MAPK signaling pathway. Required for the insulin-stimulated nuclear translocation and activation of MAPK1 and STAT3, and the subsequent regulation of cell cycle progression. The sequence is that of Caveolin-2 (CAV2) from Carollia perspicillata (Seba's short-tailed bat).